The primary structure comprises 269 residues: Histidinol-phosphatase (269 aa).

It belongs to the PHP hydrolase family. HisK subfamily.

The catalysed reaction is L-histidinol phosphate + H2O = L-histidinol + phosphate. Its pathway is amino-acid biosynthesis; L-histidine biosynthesis; L-histidine from 5-phospho-alpha-D-ribose 1-diphosphate: step 8/9. The sequence is that of Histidinol-phosphatase (hisK) from Lactococcus lactis subsp. lactis (strain IL1403) (Streptococcus lactis).